Here is a 612-residue protein sequence, read N- to C-terminus: DNA mismatch repair protein MutL (612 aa).

This sequence belongs to the DNA mismatch repair MutL/HexB family.

This protein is involved in the repair of mismatches in DNA. It is required for dam-dependent methyl-directed DNA mismatch repair. May act as a 'molecular matchmaker', a protein that promotes the formation of a stable complex between two or more DNA-binding proteins in an ATP-dependent manner without itself being part of a final effector complex. In Bartonella quintana (strain Toulouse) (Rochalimaea quintana), this protein is DNA mismatch repair protein MutL.